The chain runs to 150 residues: D-aminoacyl-tRNA deacylase (150 aa).

Residues 138-139 carry the Gly-cisPro motif, important for rejection of L-amino acids motif; that stretch reads GP.

Belongs to the DTD family. Homodimer.

The protein resides in the cytoplasm. The enzyme catalyses glycyl-tRNA(Ala) + H2O = tRNA(Ala) + glycine + H(+). The catalysed reaction is a D-aminoacyl-tRNA + H2O = a tRNA + a D-alpha-amino acid + H(+). Its function is as follows. An aminoacyl-tRNA editing enzyme that deacylates mischarged D-aminoacyl-tRNAs. Also deacylates mischarged glycyl-tRNA(Ala), protecting cells against glycine mischarging by AlaRS. Acts via tRNA-based rather than protein-based catalysis; rejects L-amino acids rather than detecting D-amino acids in the active site. By recycling D-aminoacyl-tRNA to D-amino acids and free tRNA molecules, this enzyme counteracts the toxicity associated with the formation of D-aminoacyl-tRNA entities in vivo and helps enforce protein L-homochirality. The polypeptide is D-aminoacyl-tRNA deacylase (Petrotoga mobilis (strain DSM 10674 / SJ95)).